A 122-amino-acid polypeptide reads, in one-letter code: Biogenesis of lysosome-related organelles complex 1 subunit CNL1 (122 aa).

Basic and acidic residues predominate over residues 1–10 (MQDNSSHSRE). Residues 1–21 (MQDNSSHSRESASAGDDPLGI) form a disordered region. The stretch at 63 to 95 (ENTIDKNIAKFKELLEKCDTLENHYEMLNQLAI) forms a coiled coil.

This sequence belongs to the BLOC1S4 family. Component of the biogenesis of lysosome-related organelles complex-1 (BLOC-1) composed of at least BLI1, BLS1, CNL1, KXD1, SNN1 and VAB2.

Its subcellular location is the cytoplasm. Functionally, component of the biogenesis of lysosome-related organelles complex-1 (BLOC-1), a complex that is involved in endosomal cargo sorting. This is Biogenesis of lysosome-related organelles complex 1 subunit CNL1 (CLN1) from Saccharomyces cerevisiae (strain Lalvin QA23) (Baker's yeast).